An 83-amino-acid polypeptide reads, in one-letter code: Small ribosomal subunit protein bS16 (83 aa).

It belongs to the bacterial ribosomal protein bS16 family.

The chain is Small ribosomal subunit protein bS16 from Shewanella frigidimarina (strain NCIMB 400).